We begin with the raw amino-acid sequence, 680 residues long: Transketolase 1 (680 aa).

Residue histidine 30 participates in substrate binding. Residues histidine 69 and 116–118 each bind thiamine diphosphate; that span reads GPL. Aspartate 157 lines the Mg(2+) pocket. Thiamine diphosphate is bound by residues glycine 158 and asparagine 187. Mg(2+) contacts are provided by asparagine 187 and isoleucine 189. Histidine 263 is a substrate binding site. Residue histidine 263 participates in thiamine diphosphate binding. Phosphoserine occurs at positions 286 and 335. Substrate contacts are provided by arginine 359 and serine 386. Position 402 is a phosphoserine (serine 402). Thiamine diphosphate is bound by residues glutamate 418 and phenylalanine 445. Glutamate 418 (proton donor) is an active-site residue. Residues histidine 469 and aspartate 477 each contribute to the substrate site. At serine 492 the chain carries Phosphoserine. Arginine 528 provides a ligand contact to substrate. Lysine 647 is covalently cross-linked (Glycyl lysine isopeptide (Lys-Gly) (interchain with G-Cter in ubiquitin)).

The protein belongs to the transketolase family. In terms of assembly, homodimer. Requires Mg(2+) as cofactor. It depends on Ca(2+) as a cofactor. Mn(2+) is required as a cofactor. The cofactor is Co(2+). Thiamine diphosphate serves as cofactor.

The catalysed reaction is D-sedoheptulose 7-phosphate + D-glyceraldehyde 3-phosphate = aldehydo-D-ribose 5-phosphate + D-xylulose 5-phosphate. In terms of biological role, catalyzes the transfer of a two-carbon ketol group from a ketose donor to an aldose acceptor, via a covalent intermediate with the cofactor thiamine pyrophosphate. This chain is Transketolase 1 (TKL1), found in Saccharomyces cerevisiae (strain ATCC 204508 / S288c) (Baker's yeast).